A 95-amino-acid chain; its full sequence is Aspartyl/glutamyl-tRNA(Asn/Gln) amidotransferase subunit C (95 aa).

This sequence belongs to the GatC family. As to quaternary structure, heterotrimer of A, B and C subunits.

It carries out the reaction L-glutamyl-tRNA(Gln) + L-glutamine + ATP + H2O = L-glutaminyl-tRNA(Gln) + L-glutamate + ADP + phosphate + H(+). It catalyses the reaction L-aspartyl-tRNA(Asn) + L-glutamine + ATP + H2O = L-asparaginyl-tRNA(Asn) + L-glutamate + ADP + phosphate + 2 H(+). Its function is as follows. Allows the formation of correctly charged Asn-tRNA(Asn) or Gln-tRNA(Gln) through the transamidation of misacylated Asp-tRNA(Asn) or Glu-tRNA(Gln) in organisms which lack either or both of asparaginyl-tRNA or glutaminyl-tRNA synthetases. The reaction takes place in the presence of glutamine and ATP through an activated phospho-Asp-tRNA(Asn) or phospho-Glu-tRNA(Gln). This is Aspartyl/glutamyl-tRNA(Asn/Gln) amidotransferase subunit C from Rhodopseudomonas palustris (strain BisA53).